Here is a 224-residue protein sequence, read N- to C-terminus: Cytidylate kinase (224 aa).

An ATP-binding site is contributed by 11-19; the sequence is GPAAAGKST.

This sequence belongs to the cytidylate kinase family. Type 1 subfamily.

The protein localises to the cytoplasm. It catalyses the reaction CMP + ATP = CDP + ADP. The enzyme catalyses dCMP + ATP = dCDP + ADP. This Geobacillus kaustophilus (strain HTA426) protein is Cytidylate kinase.